A 304-amino-acid chain; its full sequence is Olfactory receptor 52A4 (304 aa).

Residues 1 to 32 (MALPITNGTLFMPFVLTFIGIPGFESVQCWIG) are Extracellular-facing. Asn7 is a glycosylation site (N-linked (GlcNAc...) asparagine). A helical transmembrane segment spans residues 33–53 (IPFCATYVIALIGNSLLLIII). Topologically, residues 54–61 (KSEPSLHE) are cytoplasmic. Residues 62–82 (PMYIFLATLGATDISLSTSIV) form a helical membrane-spanning segment. Topologically, residues 83 to 103 (PKMLDIFWFHLPEIYFDACLF) are extracellular. Residues Cys101 and Cys184 are joined by a disulfide bond. A helical transmembrane segment spans residues 104–124 (QMWLIHTFQGIESGVLLAMAL). Over 125–146 (DRCVAICYPLRRAIVFTRQLVT) the chain is Cytoplasmic. A helical membrane pass occupies residues 147–167 (YIVVGVTLRPAILVIPCLLLI). At 168–203 (KCHLKLYRTKLIYHTYCERVALVKLATEDVYINKVY) the chain is on the extracellular side. Residues 204 to 224 (GILGAFIVGGLDFIFITLSYI) form a helical membrane-spanning segment. Residues 225 to 255 (QIFITVFHLPLKEARLKVFNTCIPHIYVFFQ) are Cytoplasmic-facing. Residues 256–276 (FYLLAFFFIFYSQIWILYPII) form a helical membrane-spanning segment. The Extracellular segment spans residues 277–279 (CTY). Residues 280-300 (HLVQSLPTGPTIPQPLYLWVK) traverse the membrane as a helical segment. Residues 301–304 (DQTH) are Cytoplasmic-facing.

This sequence belongs to the G-protein coupled receptor 1 family.

Its subcellular location is the cell membrane. Its function is as follows. Odorant receptor. The polypeptide is Olfactory receptor 52A4 (Homo sapiens (Human)).